The sequence spans 86 residues: Putative membrane protein insertion efficiency factor (86 aa).

It belongs to the UPF0161 family.

The protein localises to the cell inner membrane. Functionally, could be involved in insertion of integral membrane proteins into the membrane. This Oleidesulfovibrio alaskensis (strain ATCC BAA-1058 / DSM 17464 / G20) (Desulfovibrio alaskensis) protein is Putative membrane protein insertion efficiency factor.